The sequence spans 508 residues: Protein S-acyltransferase 18 (508 aa).

2 helical membrane-spanning segments follow: residues 17–37 and 42–62; these read IVGA…LGFF and IAVI…IVLF. Residues 158–208 form the DHHC domain; that stretch reads SYCSLCDLEVKRSSKHCRTCNRCVEGFDHHCRWLNNCVGKKNYTTFILLMV. The active-site S-palmitoyl cysteine intermediate is C188. Transmembrane regions (helical) follow at residues 203–223 and 250–270; these read FILL…TALA and WALA…SAAM. Positions 443–468 are disordered; the sequence is VSPGRFSSPRRRFSGSSSSTVPSPKQ. The segment covering 456-466 has biased composition (low complexity); the sequence is SGSSSSTVPSP.

This sequence belongs to the DHHC palmitoyltransferase family.

The protein localises to the endoplasmic reticulum membrane. The protein resides in the cytoplasmic vesicle membrane. The catalysed reaction is L-cysteinyl-[protein] + hexadecanoyl-CoA = S-hexadecanoyl-L-cysteinyl-[protein] + CoA. Functionally, S-acyltransferase involved in protein lipid modification. In Arabidopsis thaliana (Mouse-ear cress), this protein is Protein S-acyltransferase 18 (PAT18).